The chain runs to 720 residues: DNA replication licensing factor mcm7-A (720 aa).

The C4-type zinc-finger motif lies at cysteine 183 to cysteine 210. Positions phenylalanine 331–threonine 537 constitute an MCM domain. The ATP site is built by tyrosine 344, glycine 383, alanine 385, lysine 386, serine 387, asparagine 488, arginine 513, and arginine 603. The short motif at serine 512–aspartate 515 is the Arginine finger element.

It belongs to the MCM family. In terms of assembly, component of the mcm2-7 complex (RLF-M). The complex forms a toroidal hexameric ring with the proposed subunit order mcm2-mcm6-mcm4-mcm7-mcm3-mcm5. The heterodimer of mmcm3/mcm5 interacts with mcm4, mmcm6, mcm7 and weakly with mcm2. The N-terminus is required for interaction with mmcm3, though this interaction may not be direct, and remains in a complex with mmcm3 throughout the cell cycle. Begins to associate with zmcm6 at the neurula stage. Component of the replisome complex. Component of the CMG helicase complex, composed of the mcm2-7 complex, the GINS complex and cdc45. In terms of processing, ubiquitinated by traip when forks converge following formation of DNA interstrand cross-links. Ubiquitinated via 'Lys-6'- and 'Lys-63'-linked polyubiquitination by traip. Short ubiquitin chains on mcm7 promote recruitment of DNA glycosylase neil3. If the interstrand cross-link cannot be cleaved by neil3, the ubiquitin chains continue to grow on mcm7, promoting the unloading of the CMG helicase complex by the vcp/p97 ATPase.

The protein resides in the nucleus. Its subcellular location is the chromosome. The enzyme catalyses ATP + H2O = ADP + phosphate + H(+). Its function is as follows. Acts as a component of the mcm2-7 complex (mcm complex) which is the putative replicative helicase essential for 'once per cell cycle' DNA replication initiation and elongation in eukaryotic cells. The active ATPase sites in the mcm2-7 ring are formed through the interaction surfaces of two neighboring subunits such that a critical structure of a conserved arginine finger motif is provided in trans relative to the ATP-binding site of the Walker A box of the adjacent subunit. The six ATPase active sites, however, are likely to contribute differentially to the complex helicase activity. The existence of maternal and zygotic forms of mcm3 and mcm6 suggests that specific forms of mcm2-7 complexes may be used during different stages of development. The protein is DNA replication licensing factor mcm7-A (mcm7-a) of Xenopus laevis (African clawed frog).